The chain runs to 387 residues: GTPase Obg (387 aa).

The Obg domain maps to 1–159 (MKFVDEAIIR…RSLKLELLLL (159 aa)). One can recognise an OBG-type G domain in the interval 160 to 333 (ADVGLLGMPN…LALKLLDFID (174 aa)). GTP is bound by residues 166–173 (GMPNAGKS), 191–195 (FTTLV), 213–216 (DIPG), 283–286 (NKAD), and 314–316 (SAY). Mg(2+)-binding residues include Ser-173 and Thr-193.

It belongs to the TRAFAC class OBG-HflX-like GTPase superfamily. OBG GTPase family. In terms of assembly, monomer. Mg(2+) is required as a cofactor.

Its subcellular location is the cytoplasm. Functionally, an essential GTPase which binds GTP, GDP and possibly (p)ppGpp with moderate affinity, with high nucleotide exchange rates and a fairly low GTP hydrolysis rate. Plays a role in control of the cell cycle, stress response, ribosome biogenesis and in those bacteria that undergo differentiation, in morphogenesis control. The protein is GTPase Obg of Shewanella pealeana (strain ATCC 700345 / ANG-SQ1).